Reading from the N-terminus, the 344-residue chain is Tetraacyldisaccharide 4'-kinase (344 aa).

ATP is bound at residue 65 to 72 (HAGGTGKT).

Belongs to the LpxK family.

It carries out the reaction a lipid A disaccharide + ATP = a lipid IVA + ADP + H(+). It participates in glycolipid biosynthesis; lipid IV(A) biosynthesis; lipid IV(A) from (3R)-3-hydroxytetradecanoyl-[acyl-carrier-protein] and UDP-N-acetyl-alpha-D-glucosamine: step 6/6. Its function is as follows. Transfers the gamma-phosphate of ATP to the 4'-position of a tetraacyldisaccharide 1-phosphate intermediate (termed DS-1-P) to form tetraacyldisaccharide 1,4'-bis-phosphate (lipid IVA). This is Tetraacyldisaccharide 4'-kinase from Neisseria meningitidis serogroup A / serotype 4A (strain DSM 15465 / Z2491).